The primary structure comprises 557 residues: Dihydroxy-acid dehydratase (557 aa).

Aspartate 78 contacts Mg(2+). A [2Fe-2S] cluster-binding site is contributed by cysteine 119. Mg(2+) contacts are provided by aspartate 120 and lysine 121. An N6-carboxylysine modification is found at lysine 121. Cysteine 192 provides a ligand contact to [2Fe-2S] cluster. A Mg(2+)-binding site is contributed by glutamate 442. Serine 468 functions as the Proton acceptor in the catalytic mechanism.

This sequence belongs to the IlvD/Edd family. In terms of assembly, homodimer. Requires [2Fe-2S] cluster as cofactor. Mg(2+) serves as cofactor.

The catalysed reaction is (2R)-2,3-dihydroxy-3-methylbutanoate = 3-methyl-2-oxobutanoate + H2O. It carries out the reaction (2R,3R)-2,3-dihydroxy-3-methylpentanoate = (S)-3-methyl-2-oxopentanoate + H2O. It participates in amino-acid biosynthesis; L-isoleucine biosynthesis; L-isoleucine from 2-oxobutanoate: step 3/4. It functions in the pathway amino-acid biosynthesis; L-valine biosynthesis; L-valine from pyruvate: step 3/4. In terms of biological role, functions in the biosynthesis of branched-chain amino acids. Catalyzes the dehydration of (2R,3R)-2,3-dihydroxy-3-methylpentanoate (2,3-dihydroxy-3-methylvalerate) into 2-oxo-3-methylpentanoate (2-oxo-3-methylvalerate) and of (2R)-2,3-dihydroxy-3-methylbutanoate (2,3-dihydroxyisovalerate) into 2-oxo-3-methylbutanoate (2-oxoisovalerate), the penultimate precursor to L-isoleucine and L-valine, respectively. The sequence is that of Dihydroxy-acid dehydratase from Bacillus thuringiensis subsp. konkukian (strain 97-27).